Here is a 137-residue protein sequence, read N- to C-terminus: Small ribosomal subunit protein uS12 (137 aa).

Disordered stretches follow at residues 1–21 (MPTINQLVRKPRKSKVEKSKS) and 33–57 (KVQTNVSSPQKRGVATRVGTMTPRK). D102 carries the post-translational modification 3-methylthioaspartic acid.

This sequence belongs to the universal ribosomal protein uS12 family. As to quaternary structure, part of the 30S ribosomal subunit. Contacts proteins S8 and S17. May interact with IF1 in the 30S initiation complex.

With S4 and S5 plays an important role in translational accuracy. In terms of biological role, interacts with and stabilizes bases of the 16S rRNA that are involved in tRNA selection in the A site and with the mRNA backbone. Located at the interface of the 30S and 50S subunits, it traverses the body of the 30S subunit contacting proteins on the other side and probably holding the rRNA structure together. The combined cluster of proteins S8, S12 and S17 appears to hold together the shoulder and platform of the 30S subunit. This is Small ribosomal subunit protein uS12 from Streptococcus pneumoniae (strain ATCC 700669 / Spain 23F-1).